The sequence spans 157 residues: uncharacterized protein (157 aa).

The 138-residue stretch at 9-146 (LLINYKTLDE…GDFYVWHPET (138 aa)) folds into the N-acetyltransferase domain.

This is an uncharacterized protein from Bacillus cereus (strain ATCC 10987 / NRS 248).